The primary structure comprises 196 residues: Putative NADH dehydrogenase/NAD(P)H nitroreductase PST_3601 (196 aa).

It belongs to the nitroreductase family. HadB/RutE subfamily. FMN is required as a cofactor.

This chain is Putative NADH dehydrogenase/NAD(P)H nitroreductase PST_3601, found in Stutzerimonas stutzeri (strain A1501) (Pseudomonas stutzeri).